A 251-amino-acid chain; its full sequence is UPF0309 protein SCO4393 (251 aa).

Residues 36–220 (LADTVQNGGR…AATLADRGIE (185 aa)) form the SIS domain.

This sequence belongs to the UPF0309 family.

This chain is UPF0309 protein SCO4393, found in Streptomyces coelicolor (strain ATCC BAA-471 / A3(2) / M145).